Consider the following 290-residue polypeptide: MEKRYELNKNLAQMLKDGVIMDVVNPEQAKIAEEAGAVAVMALERVPSDIRKQGGVARTSDPKMIKEIINAVSIPVMAKVRIGHFVEAQILEAIGVDYIDESEVLTPADDLFHINKKDFKVPFVCGARNLGEALRRIGEGASMIRTKGEAGTGNVVEAVRHMRTISSEMRKLQLTPKEELMTVAKEMGAPFNLIEYVAEKGRLPVINFAAGGIATPADAALMMQLGCDGIFVGSGIFKSDNPEKRAKAIVKATTYFKDPEVLAKASENLGGAMLGLEISKLETEFAERGW.

D22 contacts D-ribose 5-phosphate. The active-site Schiff-base intermediate with D-ribose 5-phosphate is K79. Residue G151 participates in D-ribose 5-phosphate binding. R163 contacts D-glyceraldehyde 3-phosphate. D-ribose 5-phosphate contacts are provided by residues G212 and 233-234; that span reads GS.

The protein belongs to the PdxS/SNZ family. In the presence of PdxT, forms a dodecamer of heterodimers.

It catalyses the reaction aldehydo-D-ribose 5-phosphate + D-glyceraldehyde 3-phosphate + L-glutamine = pyridoxal 5'-phosphate + L-glutamate + phosphate + 3 H2O + H(+). It participates in cofactor biosynthesis; pyridoxal 5'-phosphate biosynthesis. In terms of biological role, catalyzes the formation of pyridoxal 5'-phosphate from ribose 5-phosphate (RBP), glyceraldehyde 3-phosphate (G3P) and ammonia. The ammonia is provided by the PdxT subunit. Can also use ribulose 5-phosphate and dihydroxyacetone phosphate as substrates, resulting from enzyme-catalyzed isomerization of RBP and G3P, respectively. The chain is Pyridoxal 5'-phosphate synthase subunit PdxS from Clostridium botulinum (strain Loch Maree / Type A3).